The sequence spans 267 residues: MEMO1 family protein aq_890 (267 aa).

It belongs to the MEMO1 family.

This is MEMO1 family protein aq_890 from Aquifex aeolicus (strain VF5).